The primary structure comprises 208 residues: MIDNTKIRSLLEEGLTVFQLDSIGDLLLDFLLLLNKWNKTYNLTAIRDIETMVSKHLFDSLAILPWIKGNHIIDVGTGPGLPGIPLAIAKPDLQFVLLDSNGKKISFLNEVKRQLNIKNIEPIQIRVENYHPNQGFDTVISRAFSSLEQMIKWTQHLVAQDGLWLAMKGRFPDTELVPIHQTYRVERYAVPGIEGERCCVLINNTNKE.

S-adenosyl-L-methionine-binding positions include Gly-76, Leu-81, 127 to 128 (VE), and Arg-142.

The protein belongs to the methyltransferase superfamily. RNA methyltransferase RsmG family.

It is found in the cytoplasm. The catalysed reaction is guanosine(527) in 16S rRNA + S-adenosyl-L-methionine = N(7)-methylguanosine(527) in 16S rRNA + S-adenosyl-L-homocysteine. In terms of biological role, specifically methylates the N7 position of guanine in position 527 of 16S rRNA. The protein is Ribosomal RNA small subunit methyltransferase G of Legionella pneumophila (strain Lens).